A 757-amino-acid chain; its full sequence is Polyribonucleotide nucleotidyltransferase (757 aa).

Residues D489 and D495 each contribute to the Mg(2+) site. Positions 556-615 (PKILCYKIDKDVVHKVIGSGGKTIRGISSDTSAKIDIDQNNYVYIMADTEEALMEAKTRV) constitute a KH domain. The region spanning 632–700 (GELYDGKIVS…SDGKIKLTMR (69 aa)) is the S1 motif domain. The disordered stretch occupies residues 702 to 757 (DEDRVGSGGSSSSPKKRFGAHPRKNGKDNRSNNSERGFNERSGSAEGSSISRKRFF). A compositionally biased stretch (basic residues) spans 715-725 (PKKRFGAHPRK). Positions 732–751 (SNNSERGFNERSGSAEGSSI) are enriched in polar residues.

This sequence belongs to the polyribonucleotide nucleotidyltransferase family. It depends on Mg(2+) as a cofactor.

It is found in the cytoplasm. It catalyses the reaction RNA(n+1) + phosphate = RNA(n) + a ribonucleoside 5'-diphosphate. Its function is as follows. Involved in mRNA degradation. Catalyzes the phosphorolysis of single-stranded polyribonucleotides processively in the 3'- to 5'-direction. The protein is Polyribonucleotide nucleotidyltransferase of Neorickettsia sennetsu (strain ATCC VR-367 / Miyayama) (Ehrlichia sennetsu).